Reading from the N-terminus, the 838-residue chain is Sec1 family domain-containing protein MIP3 (838 aa).

The disordered stretch occupies residues 637–677; that stretch reads KSEETKEIPSDDQLDIDALDDDPWGKWGDEEEEEVDNSKAD. Residues 646 to 658 show a composition bias toward acidic residues; it reads SDDQLDIDALDDD.

It belongs to the STXBP/unc-18/SEC1 family. In terms of assembly, forms a complex with MAG2, ZW10/MIP1 and MIP2 on the endoplasmic reticulum.

It is found in the endoplasmic reticulum membrane. Its function is as follows. Required for proper maturation of seed storage proteins. Forms a complex with MAG2, ZW10/MIP1 and MIP2 on the endoplasmic reticulum that may be responsible for efficient transport of seed storage proteins. This Arabidopsis thaliana (Mouse-ear cress) protein is Sec1 family domain-containing protein MIP3.